The primary structure comprises 103 residues: Putative truncated guanine nucleotide exchange factor YLL017W (103 aa).

In terms of domain architecture, SH3 spans 26–97 (QPIDVVECTY…PPSFYTVHSK (72 aa)).

In Saccharomyces cerevisiae (strain ATCC 204508 / S288c) (Baker's yeast), this protein is Putative truncated guanine nucleotide exchange factor YLL017W.